The following is a 274-amino-acid chain: Thymidylate synthase (274 aa).

Arg21 contributes to the dUMP binding site. His51 serves as a coordination point for (6R)-5,10-methylene-5,6,7,8-tetrahydrofolate. 123–124 (RR) serves as a coordination point for dUMP. The active-site Nucleophile is the Cys156. Residues 176 to 179 (RSAD), Asn187, and 217 to 219 (HIY) each bind dUMP. Residue Asp179 participates in (6R)-5,10-methylene-5,6,7,8-tetrahydrofolate binding. Ala273 is a binding site for (6R)-5,10-methylene-5,6,7,8-tetrahydrofolate.

The protein belongs to the thymidylate synthase family. Bacterial-type ThyA subfamily. In terms of assembly, homodimer.

It localises to the cytoplasm. It catalyses the reaction dUMP + (6R)-5,10-methylene-5,6,7,8-tetrahydrofolate = 7,8-dihydrofolate + dTMP. It participates in pyrimidine metabolism; dTTP biosynthesis. Its function is as follows. Catalyzes the reductive methylation of 2'-deoxyuridine-5'-monophosphate (dUMP) to 2'-deoxythymidine-5'-monophosphate (dTMP) while utilizing 5,10-methylenetetrahydrofolate (mTHF) as the methyl donor and reductant in the reaction, yielding dihydrofolate (DHF) as a by-product. This enzymatic reaction provides an intracellular de novo source of dTMP, an essential precursor for DNA biosynthesis. In Flavobacterium psychrophilum (strain ATCC 49511 / DSM 21280 / CIP 103535 / JIP02/86), this protein is Thymidylate synthase.